The chain runs to 85 residues: U4-theraphotoxin-Hhn1a (85 aa).

The N-terminal stretch at 1 to 22 is a signal peptide; the sequence is MKVTLISILTCAAVLVLHTTAA. A propeptide spanning residues 23-48 is cleaved from the precursor; the sequence is EELEAESQLMEVGMPDTELAAVDEER. 3 cysteine pairs are disulfide-bonded: Cys52–Cys66, Cys56–Cys77, and Cys71–Cys82.

The protein belongs to the neurotoxin 12 (Hwtx-2) family. 02 (Hwtx-2) subfamily. Monomer. Expressed by the venom gland.

The protein localises to the secreted. Neurotoxin active on both insects and mammals. The polypeptide is U4-theraphotoxin-Hhn1a (Cyriopagopus hainanus (Chinese bird spider)).